The following is a 59-amino-acid chain: Large ribosomal subunit protein uL30 (59 aa).

The protein belongs to the universal ribosomal protein uL30 family. As to quaternary structure, part of the 50S ribosomal subunit.

This Syntrophotalea carbinolica (strain DSM 2380 / NBRC 103641 / GraBd1) (Pelobacter carbinolicus) protein is Large ribosomal subunit protein uL30.